Here is a 346-residue protein sequence, read N- to C-terminus: Probable RNA methyltransferase PA14_40730 (346 aa).

Glutamate 91 acts as the Proton acceptor in catalysis. Positions 94–320 (LLPRGGLCVS…TKVRNSAGQD (227 aa)) constitute a Radical SAM core domain. A disulfide bridge links cysteine 101 with cysteine 325. [4Fe-4S] cluster is bound by residues cysteine 108, cysteine 112, and cysteine 115. Residues 153–154 (GE), serine 183, 206–208 (SLH), and asparagine 282 contribute to the S-adenosyl-L-methionine site. Cysteine 325 (S-methylcysteine intermediate) is an active-site residue.

Belongs to the radical SAM superfamily. RlmN family. [4Fe-4S] cluster serves as cofactor.

The protein localises to the cytoplasm. The polypeptide is Probable RNA methyltransferase PA14_40730 (Pseudomonas aeruginosa (strain UCBPP-PA14)).